We begin with the raw amino-acid sequence, 157 residues long: 2-C-methyl-D-erythritol 2,4-cyclodiphosphate synthase (157 aa).

Residues Asp-8 and His-10 each contribute to the a divalent metal cation site. Residues 8 to 10 (DIH) and 34 to 35 (HS) contribute to the 4-CDP-2-C-methyl-D-erythritol 2-phosphate site. A divalent metal cation is bound at residue His-42. 4-CDP-2-C-methyl-D-erythritol 2-phosphate contacts are provided by residues 56–58 (DIG), 61–65 (FPDTD), 132–135 (TTNE), and Arg-142.

The protein belongs to the IspF family. In terms of assembly, homotrimer. A divalent metal cation is required as a cofactor.

It catalyses the reaction 4-CDP-2-C-methyl-D-erythritol 2-phosphate = 2-C-methyl-D-erythritol 2,4-cyclic diphosphate + CMP. The protein operates within isoprenoid biosynthesis; isopentenyl diphosphate biosynthesis via DXP pathway; isopentenyl diphosphate from 1-deoxy-D-xylulose 5-phosphate: step 4/6. Involved in the biosynthesis of isopentenyl diphosphate (IPP) and dimethylallyl diphosphate (DMAPP), two major building blocks of isoprenoid compounds. Catalyzes the conversion of 4-diphosphocytidyl-2-C-methyl-D-erythritol 2-phosphate (CDP-ME2P) to 2-C-methyl-D-erythritol 2,4-cyclodiphosphate (ME-CPP) with a corresponding release of cytidine 5-monophosphate (CMP). The polypeptide is 2-C-methyl-D-erythritol 2,4-cyclodiphosphate synthase (Chloroherpeton thalassium (strain ATCC 35110 / GB-78)).